A 78-amino-acid chain; its full sequence is uncharacterized protein (78 aa).

Helical transmembrane passes span 12 to 32 (LVSV…ICVV) and 51 to 71 (GVGA…VAVH).

Its subcellular location is the cell membrane. This is an uncharacterized protein from Treponema pallidum (strain Nichols).